The sequence spans 302 residues: tRNA pseudouridine synthase B (302 aa).

Catalysis depends on D48, which acts as the Nucleophile.

This sequence belongs to the pseudouridine synthase TruB family. Type 1 subfamily.

The catalysed reaction is uridine(55) in tRNA = pseudouridine(55) in tRNA. Functionally, responsible for synthesis of pseudouridine from uracil-55 in the psi GC loop of transfer RNAs. This Xylella fastidiosa (strain Temecula1 / ATCC 700964) protein is tRNA pseudouridine synthase B.